Reading from the N-terminus, the 266-residue chain is Hydroxypyruvate/pyruvate aldolase (266 aa).

The active-site Proton acceptor is His48. 2 residues coordinate a divalent metal cation: Glu152 and Asp178.

The protein belongs to the HpcH/HpaI aldolase family. Requires a divalent metal cation as cofactor.

It carries out the reaction D-glyceraldehyde + pyruvate = 2-dehydro-3-deoxy-L-galactonate. It catalyses the reaction 2-dehydro-3-deoxy-D-gluconate = D-glyceraldehyde + pyruvate. Aldolase which can catalyze in vitro the aldolisation reaction between hydroxypyruvate (HPA) or pyruvate (PA) and D-glyceraldehyde (D-GA). The condensation of pyruvate and D-glyceraldehyde produces 2-dehydro-3-deoxy-L-galactonate as the major product and 2-dehydro-3-deoxy-D-gluconate. Has weak activity with hydroxypyruvate and D-glyceraldehyde. The protein is Hydroxypyruvate/pyruvate aldolase of Agrobacterium fabrum (strain C58 / ATCC 33970) (Agrobacterium tumefaciens (strain C58)).